The sequence spans 367 residues: Chorismate synthase (367 aa).

Arg-48 lines the NADP(+) pocket. Residues 125 to 127 (RSS), Gly-284, 299 to 303 (KPTPS), and Arg-325 each bind FMN.

The protein belongs to the chorismate synthase family. Homotetramer. It depends on FMNH2 as a cofactor.

The enzyme catalyses 5-O-(1-carboxyvinyl)-3-phosphoshikimate = chorismate + phosphate. It participates in metabolic intermediate biosynthesis; chorismate biosynthesis; chorismate from D-erythrose 4-phosphate and phosphoenolpyruvate: step 7/7. Its function is as follows. Catalyzes the anti-1,4-elimination of the C-3 phosphate and the C-6 proR hydrogen from 5-enolpyruvylshikimate-3-phosphate (EPSP) to yield chorismate, which is the branch point compound that serves as the starting substrate for the three terminal pathways of aromatic amino acid biosynthesis. This reaction introduces a second double bond into the aromatic ring system. In Lachnoclostridium phytofermentans (strain ATCC 700394 / DSM 18823 / ISDg) (Clostridium phytofermentans), this protein is Chorismate synthase.